The primary structure comprises 1596 residues: A-kinase anchor protein SPHKAP (1596 aa).

Disordered regions lie at residues 214-233 (KHGR…RSVS), 242-319 (ASEQ…TPKQ), 389-432 (DNSE…GHPA), 462-481 (SGEE…DQGE), and 760-809 (EQSD…SSSS). Residues 292–306 (TLCTSSNSQKLSRTY) show a composition bias toward polar residues. Positions 462–479 (SGEEYECEDEEEESETDQ) are enriched in acidic residues. The tract at residues 829–846 (FAEDLATTVVSMATELAA) is PKA-RII subunit binding domain. Disordered regions lie at residues 958–1022 (VVDT…ISKQ), 1282–1310 (VGER…ENSC), and 1328–1443 (VPLI…SSLG). A compositionally biased stretch (polar residues) spans 959–971 (VDTSKSGQSSRSR). Over residues 1333 to 1356 (IEPDQREEASEEKGGVETHHREAS) the composition is skewed to basic and acidic residues. The segment covering 1357-1372 (HQTQQQSGKGSETATK) has biased composition (polar residues). 2 stretches are compositionally biased toward low complexity: residues 1398–1409 (LSASSEESGSGS) and 1430–1443 (LSEG…SSLG).

It belongs to the AKAP110 family.

Its subcellular location is the cytoplasm. In terms of biological role, anchoring protein that mediates the subcellular compartmentation of cAMP-dependent protein kinase (PKA type II). This Danio rerio (Zebrafish) protein is A-kinase anchor protein SPHKAP (sphkap).